We begin with the raw amino-acid sequence, 1364 residues long: MADRPLTQQRLRKSFGKIAKIVDIPNLIEMQRISYQRFLQMDVPPEKRETIGLQAVFHSVFPIRDFSGTASLEFVSYRFGEIKYSVEDCVHRGMTYEVPIRITVRLVVFDVDKEKGIQNIRDIKEQEIYFGTIPLMTEQGTFVINGTERVVVSQLHRSSGVFFDHDKGKSHASGKVIYTARIIPVRGSWIDMEIDPKDVLYIRIDRRRKFPATLLFKAFGYSTEDLLNYFYQTEKLTLTPKTLFKEFDAKTLRGQRASITVKMPDSDEVIVKKGRLFTQRAVKTMAQAGIEKVAILQEDLEDKVLARRVLDPKTGEVLYPANHEIDEATLEAMRDAGVQKFEILYSAPGTGGDSVRKALLLDKVESREEALVEIYRRLRPSNPSTVEVAKDFIDQLFFRPSHYDLSAVGRMKLNMRLGLDTPVEVKTLRREDILLTAKTLVDLKDSQGAVDDIDHLGNRRVRAVGELLENQYRIGLVRMERAIKERMSLQEIDALMPNDLINPKPVSAVVKEFFGTSQLSQFMDQTNPLSEVTHKRRLSALGPGGLTRERAGFEVRDVHPSHYGRICPIETPEGPNIGLIVSLSTYARVNEFGFVETPYRVVTEGQATKEIKYLSAMEEKDLPIAQANAPLDEEGFFINPTVSSRVEGELTIVKKEDVKLMDISPNQLVSVSSSMIPFLENDDANRALMGSNMQRQAVPLLATEAPLIGTGLERVVARDSGVTLVAKRDGKVVAVDASRIVLQHEDERKDRMDKQVTIYNLSKFTRSNQNTCFNQRPIVKLGQEVKAGDIIADGPATENGELALGRNVTVAFLPWGGYNFEDSILVSERLVRDGVFTSVHIEEFEVVSRDTKLGKEEITRDIPNVGEEALKNLDDSGIVRLGAEVRPGDILVGKITPKGETQLSPEEKLLRAIFGEKAGDVKDTSLRVPPGVEGVVVDAKVFARRGVEKDDRTRLIEDEEIAALEKDRDDELKIMEDTVRSKLITIVLGQEATAPVKKGKAVLIPKGQPITAEMLEDCPLAPLEALVLKDEDHSERVHELLEIYREQRESVQMSFEEQVNRYQKGDDLPPGVIKMVKIYVAMKRRLSVGDKMAGRHGNKGVVSCILPQEDLPYFENGTPVDMVLNPLGVPSRMNVGQILEIHLGRAAKSLGDQIEALLEEQKLDGLRQKMQEIFSSDADEVAGLTEQELLEVAGQYKRGVHMATPVFDGAKEDEITDLLSSAGVSPSGQAVLYDGRTGERFKGEITVGTMYMLKLHHLVDDKIHARSIGPYSLVTQQPLGGKAQFGGQRLGEMEVWAMEAYGAAYALQEFLTVKSDDMVGRTRMYEKIVKGQNVLEPGMPESFNVLVKELQSLGLEMSLIEEAK.

This sequence belongs to the RNA polymerase beta chain family. As to quaternary structure, the RNAP catalytic core consists of 2 alpha, 1 beta, 1 beta' and 1 omega subunit. When a sigma factor is associated with the core the holoenzyme is formed, which can initiate transcription.

The catalysed reaction is RNA(n) + a ribonucleoside 5'-triphosphate = RNA(n+1) + diphosphate. Functionally, DNA-dependent RNA polymerase catalyzes the transcription of DNA into RNA using the four ribonucleoside triphosphates as substrates. This Desulfatibacillum aliphaticivorans protein is DNA-directed RNA polymerase subunit beta.